Here is a 230-residue protein sequence, read N- to C-terminus: Potassium/proton antiporter CemA (230 aa).

4 helical membrane-spanning segments follow: residues Leu7 to Phe27, Ile106 to Leu126, Leu145 to His165, and Leu181 to Leu201.

It belongs to the CemA family.

The protein localises to the plastid. Its subcellular location is the chloroplast inner membrane. It carries out the reaction K(+)(in) + H(+)(out) = K(+)(out) + H(+)(in). Contributes to K(+)/H(+) antiport activity by supporting proton efflux to control proton extrusion and homeostasis in chloroplasts in a light-dependent manner to modulate photosynthesis. Prevents excessive induction of non-photochemical quenching (NPQ) under continuous-light conditions. Indirectly promotes efficient inorganic carbon uptake into chloroplasts. In Zea mays (Maize), this protein is Potassium/proton antiporter CemA.